Here is a 673-residue protein sequence, read N- to C-terminus: Annexin A6 (673 aa).

An N-acetylalanine modification is found at A2. Residue S13 is modified to Phosphoserine. Annexin repeat units follow at residues 20–91 (FNPS…GLMR), 92–163 (PPAY…VLLQ), 175–247 (DLVQ…AVVK), 251–322 (STAE…KLCG), 363–434 (FNPD…GLMM), 435–506 (PPAH…SLAT), 521–595 (EDAQ…AIVQ), and 599–670 (NKPL…AICG). Y30 is subject to Phosphotyrosine. Residues K63, K68, K75, and K81 each carry the N6-acetyllysine modification. At Y201 the chain carries Phosphotyrosine. K306, K370, and K418 each carry N6-acetyllysine. S422 is subject to Phosphoserine. Position 483 is an N6-acetyllysine (K483). Residue S537 is modified to Phosphoserine. K620 is modified (N6-acetyllysine).

Belongs to the annexin family. Post-translationally, phosphorylated in response to growth factor stimulation.

The protein localises to the cytoplasm. It localises to the melanosome. In terms of biological role, may associate with CD21. May regulate the release of Ca(2+) from intracellular stores. The protein is Annexin A6 (ANXA6) of Bos taurus (Bovine).